Reading from the N-terminus, the 1616-residue chain is Replicase large subunit (1616 aa).

The tract at residues 50–458 is methyltransferase; sequence FSKVISEEQT…QSLSMTFYLH (409 aa). Positions 72-281 constitute an Alphavirus-like MT domain; the sequence is TFYNTQNAVH…HSYSNILKYV (210 aa). The (+)RNA virus helicase ATP-binding domain occupies 801 to 963; it reads VVYSDMAKLR…KLEVDEVETR (163 aa). The segment at 830-1085 is helicase; it reads LVDGVPGCGK…RHTCSLKYYT (256 aa). 833 to 840 lines the ATP pocket; that stretch reads GVPGCGKT. The (+)RNA virus helicase C-terminal domain maps to 964-1116; sequence RTTLRCPADV…DMYKVDAGTQ (153 aa). One can recognise a RdRp catalytic domain in the interval 1380–1493; it reads MDVLELDISK…YFPKGCEFPD (114 aa).

This sequence belongs to the ssRNA positive-strand viruses RNA-directed RNA polymerase family. As to quaternary structure, heterodimer of a large and a small subunit.

It catalyses the reaction RNA(n) + a ribonucleoside 5'-triphosphate = RNA(n+1) + diphosphate. The enzyme catalyses ATP + H2O = ADP + phosphate + H(+). In terms of biological role, is an RNA-dependent RNA polymerase active in viral RNA replication. Is a methyltransferase active in RNA capping and an RNA helicase. Methyltransferase displays a cytoplasmic capping enzyme activity. This function is necessary since all viral RNAs are synthesized in the cytoplasm, and host capping enzymes are restricted to the nucleus. Helicase region probably exhibits NTPase and RNA unwinding activities (Potential). It also acts as a suppressor of RNA-mediated gene silencing, also known as post-transcriptional gene silencing (PTGS), a mechanism of plant viral defense that limits the accumulation of viral RNAs. May mediate silencing suppression through either inhibition of HEN1-mediated siRNA or siRNA demethylation. This Nicotiana tabacum (Common tobacco) protein is Replicase large subunit.